Consider the following 124-residue polypeptide: Small ribosomal subunit protein uS12 (124 aa).

Residues 1–26 are disordered; the sequence is MPTISQLVGSERKRLTKKTKSPALKA. At aspartate 89 the chain carries 3-methylthioaspartic acid. A disordered region spans residues 104–124; sequence TAGVKDRRQSRSKYGAKAPKD.

The protein belongs to the universal ribosomal protein uS12 family. Part of the 30S ribosomal subunit. Contacts proteins S8 and S17. May interact with IF1 in the 30S initiation complex.

With S4 and S5 plays an important role in translational accuracy. Functionally, interacts with and stabilizes bases of the 16S rRNA that are involved in tRNA selection in the A site and with the mRNA backbone. Located at the interface of the 30S and 50S subunits, it traverses the body of the 30S subunit contacting proteins on the other side and probably holding the rRNA structure together. The combined cluster of proteins S8, S12 and S17 appears to hold together the shoulder and platform of the 30S subunit. The protein is Small ribosomal subunit protein uS12 of Prochlorococcus marinus (strain MIT 9215).